The following is a 354-amino-acid chain: Ribosomal RNA large subunit methyltransferase M (354 aa).

Residues Ser-183, 216–219 (SPGG), Asp-235, Asp-255, and Asp-271 contribute to the S-adenosyl-L-methionine site. The active-site Proton acceptor is the Lys-300.

The protein belongs to the class I-like SAM-binding methyltransferase superfamily. RNA methyltransferase RlmE family. RlmM subfamily. In terms of assembly, monomer.

The protein resides in the cytoplasm. The catalysed reaction is cytidine(2498) in 23S rRNA + S-adenosyl-L-methionine = 2'-O-methylcytidine(2498) in 23S rRNA + S-adenosyl-L-homocysteine + H(+). Catalyzes the 2'-O-methylation at nucleotide C2498 in 23S rRNA. This chain is Ribosomal RNA large subunit methyltransferase M, found in Pseudomonas entomophila (strain L48).